Consider the following 569-residue polypeptide: 2-isopropylmalate synthase (569 aa).

The region spanning 31–305 (PRWMSTDLRD…APELDFSDID (275 aa)) is the Pyruvate carboxyltransferase domain. 4 residues coordinate Mg(2+): aspartate 40, histidine 244, histidine 246, and asparagine 280. The segment at 437–569 (RETPLRYVSH…TASASAATEA (133 aa)) is regulatory domain.

Belongs to the alpha-IPM synthase/homocitrate synthase family. LeuA type 2 subfamily. In terms of assembly, homodimer. Requires Mg(2+) as cofactor.

It localises to the cytoplasm. It catalyses the reaction 3-methyl-2-oxobutanoate + acetyl-CoA + H2O = (2S)-2-isopropylmalate + CoA + H(+). It functions in the pathway amino-acid biosynthesis; L-leucine biosynthesis; L-leucine from 3-methyl-2-oxobutanoate: step 1/4. Catalyzes the condensation of the acetyl group of acetyl-CoA with 3-methyl-2-oxobutanoate (2-ketoisovalerate) to form 3-carboxy-3-hydroxy-4-methylpentanoate (2-isopropylmalate). The protein is 2-isopropylmalate synthase of Cupriavidus taiwanensis (strain DSM 17343 / BCRC 17206 / CCUG 44338 / CIP 107171 / LMG 19424 / R1) (Ralstonia taiwanensis (strain LMG 19424)).